The primary structure comprises 459 residues: Argininosuccinate lyase (459 aa).

This sequence belongs to the lyase 1 family. Argininosuccinate lyase subfamily.

The protein localises to the cytoplasm. It carries out the reaction 2-(N(omega)-L-arginino)succinate = fumarate + L-arginine. It functions in the pathway amino-acid biosynthesis; L-arginine biosynthesis; L-arginine from L-ornithine and carbamoyl phosphate: step 3/3. This chain is Argininosuccinate lyase, found in Chromobacterium violaceum (strain ATCC 12472 / DSM 30191 / JCM 1249 / CCUG 213 / NBRC 12614 / NCIMB 9131 / NCTC 9757 / MK).